The primary structure comprises 148 residues: Transcriptional regulator MraZ (148 aa).

2 SpoVT-AbrB domains span residues 5 to 51 (AAAL…PSPA) and 80 to 123 (ARTE…SEAG).

It belongs to the MraZ family. In terms of assembly, forms oligomers.

The protein localises to the cytoplasm. Its subcellular location is the nucleoid. This is Transcriptional regulator MraZ from Dechloromonas aromatica (strain RCB).